A 1128-amino-acid polypeptide reads, in one-letter code: MTSLRRGNICWVAVCAALLTLTRGIDVIAKPSRTPSNGDVQLVGGASPAEGRVEVFYNGAWGTVCDDGWEMQDAQIVCKQLGFASANSTRCCASFGQGTGVIILDDLACTGDETRIGDCPHRGWEQHNCAHTEDAGVVCNGKVRLAGSPNPLQGRLEIFHEGEWGTVCDSDWDLKDASVVCRQLGYPSANSSSNVSFGPASTAQILLDRVSCMGDEHGVEYCEHGDWKNVSADCTHSRDAGVICTRPIRLVGGNGPMQGRVEILHNGEWGSVCDKGWSFQNAVVVCNQLGATQPRRPQGVPVGGGVGPTHMSFVNCDGTEATLEQCSNSGWGNAGECGHSNDAGVICTPAVRLVGGNTHIEGRVEVFNNGQWGSICPESWDAKDAEVACRQLGNYPLAEGDCCPQFPADVGVVLDNVVCTGNESRIQDCAHQDWGVVDCSGGQAAGAKCQATVQLVGGSHPLEGNVIVLRNGRWGSICDDNWDINDARVVCRQLGNYEAVAATCCAKYGQVPQEIILDDVACQGEEGRIEDCYHATWGSHNCGGSESAGVVCREIRLALDDSSSNLPKGRVEIVYNGVWGRICGTDWDLNDANVLCRQLYNSTAESVHSFKNGSGPILLSNFKCTGSESNIFDCTHNPWGDYTCDDADAAVVCRGGLRLAGGRTPLEGRVEVFHDGQWGTVCDDGWDLLDAKVVCTQLGNYEALSAKCCANFGQGTGPILIDGLACNGNEDLIEDCRHEGWGSHNCQHYEDAGVVCTDLRLTHENGSVSTNTLTGRVEVLSSSGEWGAICGKYWDKKDAEVVCQQLFNTSAMDTRKFYLSSPDQLINMGEVQCNGSESLLLQCPRASKPFTAQTCPGGETAGVLCKDIRLVSGNQREFGAVELLVDSQWGSICADNWGPNEGAVACKQLGYCAAKGTQKGLQPARTQGKMHFSSMNCTGSESRLRDCVHTYGGYTCNGLVFEAVVQCKAGCDWPGPIRHGSFSPNRSSYDPLTTIDVKCDAGYELMGSKTLQCVTGCDWSRPTPECQRISNCSIGGGGKPSVGAQAGPAGGVMLIIGIILGAVVMMLIACVALYLKGRNKNIGRGNPATTSAIWKPKKEFDELKEPVLSFSAMTAGGAGPEDGMGEDI.

Positions 1–24 (MTSLRRGNICWVAVCAALLTLTRG) are cleaved as a signal peptide. Over 25–1051 (IDVIAKPSRT…VGAQAGPAGG (1027 aa)) the chain is Extracellular. SRCR domains lie at 40–140 (VQLV…VVCN), 143–245 (VRLA…VICT), 248–348 (IRLV…VICT), 351–450 (VRLV…AKCQ), 453–553 (VQLV…VVCR), 555–654 (IRLA…VVCR), 657–757 (LRLA…VVCT), 759–866 (LRLT…VLCK), and 868–968 (IRLV…VQCK). Intrachain disulfides connect Cys-65-Cys-129, Cys-78-Cys-139, Cys-109-Cys-119, Cys-168-Cys-234, Cys-181-Cys-244, Cys-212-Cys-222, Cys-273-Cys-337, Cys-286-Cys-347, Cys-316-Cys-326, Cys-376-Cys-439, Cys-389-Cys-449, Cys-419-Cys-429, Cys-478-Cys-542, Cys-491-Cys-552, Cys-522-Cys-532, Cys-583-Cys-644, Cys-596-Cys-653, Cys-624-Cys-634, Cys-682-Cys-746, Cys-695-Cys-756, and Cys-726-Cys-736. Asn-87 carries N-linked (GlcNAc...) asparagine glycosylation. Residues Asn-190 and Asn-194 are each glycosylated (N-linked (GlcNAc...) asparagine). Asn-229 carries an N-linked (GlcNAc...) asparagine glycan. Asn-422 carries N-linked (GlcNAc...) asparagine glycosylation. N-linked (GlcNAc...) asparagine glycans are attached at residues Asn-601 and Asn-612. Asn-765, Asn-808, Asn-834, and Asn-936 each carry an N-linked (GlcNAc...) asparagine glycan. 6 cysteine pairs are disulfide-bonded: Cys-803/Cys-865, Cys-833/Cys-843, Cys-906/Cys-967, Cys-937/Cys-947, Cys-971/Cys-1013, and Cys-999/Cys-1026. The Sushi domain maps to 969 to 1028 (AGCDWPGPIRHGSFSPNRSSYDPLTTIDVKCDAGYELMGSKTLQCVTGCDWSRPTPECQR). Asn-985 carries an N-linked (GlcNAc...) asparagine glycan. The N-linked (GlcNAc...) asparagine glycan is linked to Asn-1031. Residues 1052–1072 (VMLIIGIILGAVVMMLIACVA) form a helical membrane-spanning segment. Residues 1073-1128 (LYLKGRNKNIGRGNPATTSAIWKPKKEFDELKEPVLSFSAMTAGGAGPEDGMGEDI) are Cytoplasmic-facing.

In terms of tissue distribution, from the mid-gastrula stage, expressed only in mesenchyme cells that are migrating toward the body wall. At the brachiolaria stage, expressed in presumptive coelomocytes of the coelomic pouch. Also expressed in adult coelomocytes (at protein level).

It localises to the cytoplasmic vesicle membrane. In terms of biological role, involved in aggregate formation and phagocytosis by larval mesenchyme cells and adult coelomocytes. Binds to bacteria and may act as an opsonin in the innate immune system. The sequence is that of Scavenger receptor cysteine-rich domain superfamily protein from Patiria pectinifera (Starfish).